The sequence spans 179 residues: Large ribosomal subunit protein uL5 (179 aa).

This sequence belongs to the universal ribosomal protein uL5 family. In terms of assembly, part of the 50S ribosomal subunit; part of the 5S rRNA/L5/L18/L25 subcomplex. Contacts the 5S rRNA and the P site tRNA. Forms a bridge to the 30S subunit in the 70S ribosome.

This is one of the proteins that bind and probably mediate the attachment of the 5S RNA into the large ribosomal subunit, where it forms part of the central protuberance. In the 70S ribosome it contacts protein S13 of the 30S subunit (bridge B1b), connecting the 2 subunits; this bridge is implicated in subunit movement. Contacts the P site tRNA; the 5S rRNA and some of its associated proteins might help stabilize positioning of ribosome-bound tRNAs. The polypeptide is Large ribosomal subunit protein uL5 (Staphylococcus haemolyticus (strain JCSC1435)).